A 441-amino-acid polypeptide reads, in one-letter code: ATP-dependent RNA helicase sub2 (441 aa).

The segment covering 19–29 (DAAATTAAPAA) has biased composition (low complexity). Residues 19–43 (DAAATTAAPAANGAQDKKGDLTVSG) form a disordered region. A Q motif motif is present at residues 58-86 (TGFRDFLLKGELLRAITDCGFEHPSEVQQ). The 176-residue stretch at 89–264 (IPTAILNVDV…KKFMRNPLEV (176 aa)) folds into the Helicase ATP-binding domain. 102–109 (AKSGLGKT) provides a ligand contact to ATP. A DEAD box motif is present at residues 211–214 (DECD). A Helicase C-terminal domain is found at 276–437 (GLQQYYIKLS…EYPEGGVDSS (162 aa)).

The protein belongs to the DEAD box helicase family. DECD subfamily.

It localises to the nucleus. The enzyme catalyses ATP + H2O = ADP + phosphate + H(+). Its function is as follows. ATP-binding RNA helicase involved in transcription elongation and required for the export of mRNA out of the nucleus. SUB2 also plays a role in pre-mRNA splicing and spliceosome assembly. May be involved in rDNA and telomeric silencing, and maintenance of genome integrity. This chain is ATP-dependent RNA helicase sub2 (sub2), found in Neosartorya fischeri (strain ATCC 1020 / DSM 3700 / CBS 544.65 / FGSC A1164 / JCM 1740 / NRRL 181 / WB 181) (Aspergillus fischerianus).